Consider the following 259-residue polypeptide: Imidazole glycerol phosphate synthase subunit HisF (259 aa).

Catalysis depends on residues Asp11 and Asp130.

Belongs to the HisA/HisF family. As to quaternary structure, heterodimer of HisH and HisF.

The protein resides in the cytoplasm. The catalysed reaction is 5-[(5-phospho-1-deoxy-D-ribulos-1-ylimino)methylamino]-1-(5-phospho-beta-D-ribosyl)imidazole-4-carboxamide + L-glutamine = D-erythro-1-(imidazol-4-yl)glycerol 3-phosphate + 5-amino-1-(5-phospho-beta-D-ribosyl)imidazole-4-carboxamide + L-glutamate + H(+). It participates in amino-acid biosynthesis; L-histidine biosynthesis; L-histidine from 5-phospho-alpha-D-ribose 1-diphosphate: step 5/9. Its function is as follows. IGPS catalyzes the conversion of PRFAR and glutamine to IGP, AICAR and glutamate. The HisF subunit catalyzes the cyclization activity that produces IGP and AICAR from PRFAR using the ammonia provided by the HisH subunit. The polypeptide is Imidazole glycerol phosphate synthase subunit HisF (Polaromonas sp. (strain JS666 / ATCC BAA-500)).